The primary structure comprises 892 residues: Translation initiation factor IF-2 (892 aa).

Composition is skewed to basic and acidic residues over residues 93–159 (VKRD…KDKV) and 166–216 (DMTK…EENK). The disordered stretch occupies residues 93–304 (VKRDPQEAER…SSLQQGFQKP (212 aa)). Over residues 254-269 (GRGRNAKAARPAKKGK) the composition is skewed to basic residues. Residues 270–282 (HAESKADREEARA) are compositionally biased toward basic and acidic residues. The 170-residue stretch at 391-560 (PRAPVVTIMG…LLQAEVLELK (170 aa)) folds into the tr-type G domain. The G1 stretch occupies residues 400–407 (GHVDHGKT). 400–407 (GHVDHGKT) contributes to the GTP binding site. Residues 425 to 429 (GITQH) are G2. Residues 446-449 (DTPG) form a G3 region. Residues 446-450 (DTPGH) and 500-503 (NKID) each bind GTP. Residues 500–503 (NKID) are G4. Positions 536-538 (SAK) are G5.

The protein belongs to the TRAFAC class translation factor GTPase superfamily. Classic translation factor GTPase family. IF-2 subfamily.

Its subcellular location is the cytoplasm. Functionally, one of the essential components for the initiation of protein synthesis. Protects formylmethionyl-tRNA from spontaneous hydrolysis and promotes its binding to the 30S ribosomal subunits. Also involved in the hydrolysis of GTP during the formation of the 70S ribosomal complex. In Salmonella gallinarum (strain 287/91 / NCTC 13346), this protein is Translation initiation factor IF-2.